Reading from the N-terminus, the 397-residue chain is Sporulation-specific protein 20 (397 aa).

The interval 1-26 (MGFRKILASKSHHSRHHNQHHKNLKL) is disordered. The segment at 4–50 (RKILASKSHHSRHHNQHHKNLKLQNHRYVLISNITGSHETKYLSPFR) is inhibitory region. The span at 10 to 26 (KSHHSRHHNQHHKNLKL) shows a compositional bias: basic residues. A positive regulatory region region spans residues 51–95 (MDNCSGSRRRDRLHVKLKSLRNKIHKQLHPNCRFDDATKTSDDKC). Residues 330 to 392 (NQMEIDLYGN…QAKRYRLEKV (63 aa)) enclose the t-SNARE coiled-coil homology domain.

It belongs to the SNAP-25 family. Interacts with the t-SNARE SSO1 and the v-SNARE SNC2.

The protein localises to the cell membrane. The protein resides in the prospore membrane. Required to maintain the prospore membrane to the nucleus during sporulation in order to capture the daughter nuclei and form the spores. Mediates the fusion of exocytic vesicles with the plasma membrane during sporulation through its interactions with the t-SNARE SSO1 and v-SNARE SNC2. The sequence is that of Sporulation-specific protein 20 (SPO20) from Saccharomyces cerevisiae (strain ATCC 204508 / S288c) (Baker's yeast).